Consider the following 95-residue polypeptide: Virion membrane protein OPG135 (95 aa).

An N-terminal signal peptide occupies residues 1–22; the sequence is MSCYTAILKSVGGLALFQDANG. Over 23–45 the chain is Intravirion; sequence AIDLCRHFFMYFCEQKLRPNSFW. Residues 46-66 traverse the membrane as a helical segment; it reads FVVVRAIASMIMYLVLGIALL. Over 67-83 the chain is Virion surface; it reads YISEQDDKKNTNNASNS. Residues 76–95 form a disordered region; sequence NTNNASNSNKLNESSINSNS. Residues 77–95 are compositionally biased toward low complexity; sequence TNNASNSNKLNESSINSNS. N-linked (GlcNAc...) asparagine; by host glycans are attached at residues Asn79 and Asn87.

It belongs to the oerthopoxvirus OPG135 family.

The protein localises to the virion membrane. Its subcellular location is the host cytoplasm. Functionally, envelope protein. Required for an early step in virion morphogenesis. This is Virion membrane protein OPG135 (OPG135) from Homo sapiens (Human).